Consider the following 277-residue polypeptide: Putative hydro-lyase BP1875 (277 aa).

Belongs to the D-glutamate cyclase family.

This is Putative hydro-lyase BP1875 from Bordetella pertussis (strain Tohama I / ATCC BAA-589 / NCTC 13251).